The sequence spans 242 residues: uncharacterized protein (242 aa).

Disordered regions lie at residues 16-121 (GLYK…GAMA) and 152-178 (PVRPAKLPKGKGRLRRPRQSRFKTQPV). Composition is skewed to pro residues over residues 50–64 (PRPPTGPPARYPSPA) and 97–113 (EPRPPPESPGAQPPPGP). Basic residues predominate over residues 157-172 (KLPKGKGRLRRPRQSR). Thr-175 carries the post-translational modification Phosphothreonine. Ser-192, Ser-206, Ser-216, Ser-232, and Ser-238 each carry phosphoserine. Residues 215–242 (QSLSLQREPLGSCKLRNSLDSSDSDSAL) are disordered. A compositionally biased stretch (low complexity) spans 232–242 (SLDSSDSDSAL).

Its subcellular location is the cytoplasm. This is an uncharacterized protein from Rattus norvegicus (Rat).